The primary structure comprises 140 residues: Transcription antitermination protein NusB (140 aa).

The protein belongs to the NusB family.

Its function is as follows. Involved in transcription antitermination. Required for transcription of ribosomal RNA (rRNA) genes. Binds specifically to the boxA antiterminator sequence of the ribosomal RNA (rrn) operons. This Myxococcus xanthus (strain DK1622) protein is Transcription antitermination protein NusB.